The chain runs to 173 residues: Dual-action ribosomal maturation protein DarP (173 aa).

Belongs to the DarP family.

The protein localises to the cytoplasm. Member of a network of 50S ribosomal subunit biogenesis factors which assembles along the 30S-50S interface, preventing incorrect 23S rRNA structures from forming. Promotes peptidyl transferase center (PTC) maturation. This Pseudomonas syringae pv. tomato (strain ATCC BAA-871 / DC3000) protein is Dual-action ribosomal maturation protein DarP.